A 61-amino-acid chain; its full sequence is MSSTTSTINLSSLGSAINDVLNIIVQYLPVFVTVAVLFGIITYMTGGLGGLFSGITGIFGS.

The Extracellular portion of the chain corresponds to 1–20 (MSSTTSTINLSSLGSAINDV). A helical transmembrane segment spans residues 21-41 (LNIIVQYLPVFVTVAVLFGII). Residues 42-61 (TYMTGGLGGLFSGITGIFGS) lie on the Cytoplasmic side of the membrane.

The protein localises to the host membrane. This is an uncharacterized protein from Acidianus filamentous virus 2 (isolate Italy/Pozzuoli) (AFV-2).